The sequence spans 635 residues: Probable ethylene response sensor 2 (635 aa).

A run of 3 helical transmembrane segments spans residues 24-44 (ISDF…IYFV), 59-79 (FGAF…TFAI), and 94-114 (ATAV…PDLL). Positions 66 and 70 each coordinate Cu cation. Positions 159 to 308 (DRHTILRTTL…VVADQVAVAL (150 aa)) constitute a GAF domain. One can recognise a Histidine kinase domain in the interval 351 to 589 (VMNHEMRTPM…MFFVKLGMPE (239 aa)). Position 354 is a phosphohistidine; by autocatalysis (H354).

Belongs to the ethylene receptor family. Homodimer. It depends on Cu cation as a cofactor.

Its subcellular location is the endoplasmic reticulum membrane. The enzyme catalyses ATP + protein L-histidine = ADP + protein N-phospho-L-histidine.. In terms of biological role, ethylene receptor related to bacterial two-component regulators. Acts as a negative regulator of ethylene signaling. May play a role in the regulation of flowering by up-regulating GI (GIGANTEA) and RCN1 and regulate starch accumulation by down-regulating the alpha-amylase AMY3D. This chain is Probable ethylene response sensor 2 (ERS2), found in Oryza sativa subsp. japonica (Rice).